The sequence spans 576 residues: DM7 family protein GD16138 (576 aa).

Residues 454-481 (FPELEPDSEPEPEPEPQTEDEGEDEGDK) form a disordered region. Over residues 457–478 (LEPDSEPEPEPEPQTEDEGEDE) the composition is skewed to acidic residues.

Belongs to the DM7 family.

The chain is DM7 family protein GD16138 from Drosophila simulans (Fruit fly).